Reading from the N-terminus, the 720-residue chain is TAL effector protein Rip19 (720 aa).

2 disordered regions span residues 13 to 85 and 175 to 205; these read SVSL…PSLV and QAFA…PTFL. A compositionally biased stretch (pro residues) spans 67-85; that stretch reads PRRPLPVAPASAPPAPSLV. Positions 185-191 match the Nuclear localization signal 1 motif; it reads RSARARR. A Cryptic repeat -1 repeat occupies 286-320; sequence LTRAHIVDIARQRSGDLALQALLPVATALTAAPLR. The Cryptic repeat 0 repeat unit spans residues 321 to 354; that stretch reads LSASQIATVAQYGERPAIQALYRLRRKLTRAPLH. A Core repeat 1 repeat occupies 355–389; sequence LTPQQVVAIASHDGGKPALEAVWAKLPVLRGVPYA. The Cryptic repeat +1 repeat unit spans residues 390–423; sequence LSTAQVVAIACISGQQALEAIEAHMPTLRQAPHS. A Cryptic repeat +2 repeat occupies 424-457; the sequence is LSPERVAAIACIGGRSAVEAVRQGLPVKAIRRIR. 3 consecutive short sequence motifs (nuclear localization signal) follow at residues 455-458, 583-586, and 620-623; these read RIRR, HRKR, and RRKR. Residues 571 to 611 form a disordered region; sequence SPGMAGQSACSPHRKRPAETAIAPRSIRRRPNNAGQPSEPW.

Belongs to the transcription activator-like effector (TALE) family. RipTAL/RTL subfamily.

It is found in the secreted. The protein localises to the host nucleus. Does not activate plant gene transcription, because it has too few core repeats. This is TAL effector protein Rip19 from Ralstonia solanacearum (Pseudomonas solanacearum).